Reading from the N-terminus, the 423-residue chain is Putative gustatory receptor 97a (423 aa).

Topologically, residues 1–31 (MRFLRRQTRRLRSIWQRSLPVRFRRGKLHTQ) are cytoplasmic. A helical membrane pass occupies residues 32-52 (LVTICLYATVFLNILYGVYLG). Residues 53–65 (RFSFRRKKFVFSK) are Extracellular-facing. Residues 66–86 (GLTIYSLFVATFFALFYIWNI) form a helical membrane-spanning segment. The Cytoplasmic segment spans residues 87–99 (YNEISTGQINLRD). Residues 100–120 (TIGIYCYMNVCVCLFNYVTQW) form a helical membrane-spanning segment. At 121–152 (EKTLQIIRFQNSVPLFKVLDSLDISAMIVWRA) the chain is on the extracellular side. Residues 153–173 (FIYGLLKIVFCPLITYITLIL) form a helical membrane-spanning segment. At 174–200 (YHRRSISESQWTSVTTTKTMLPLIVSN) the chain is on the cytoplasmic side. A helical membrane pass occupies residues 201–221 (QINNCFFGGLVLANLIFAAVN). The Extracellular portion of the chain corresponds to 222–278 (RKLHGIVKEANMLQSPVQMNLHKPYYRMRRFCELADLLDELARKYGFTASRSKNYLR). The chain crosses the membrane as a helical span at residues 279 to 299 (FTDWSMVLSMLMNLLGITMGC). Over 300-317 (YNQYLAIADHYINEEPFD) the chain is Cytoplasmic. Residues 318 to 338 (LFLAIVLVVFLAVPFLELVMV) traverse the membrane as a helical segment. Residues 339 to 423 (ARISNQTLTR…SDLTLRFSLK (85 aa)) are Extracellular-facing. Residues Asn343 and Asn393 are each glycosylated (N-linked (GlcNAc...) asparagine).

The protein belongs to the insect chemoreceptor superfamily. Gustatory receptor (GR) family. Gr22e subfamily. In larvae, is expressed in neurons of the terminal external chemosensory organ.

The protein resides in the cell membrane. Functionally, probable gustatory receptor which mediates acceptance or avoidance behavior, depending on its substrates. The protein is Putative gustatory receptor 97a (Gr97a) of Drosophila melanogaster (Fruit fly).